Consider the following 195-residue polypeptide: Imidazoleglycerol-phosphate dehydratase (195 aa).

The protein belongs to the imidazoleglycerol-phosphate dehydratase family.

The protein resides in the cytoplasm. It carries out the reaction D-erythro-1-(imidazol-4-yl)glycerol 3-phosphate = 3-(imidazol-4-yl)-2-oxopropyl phosphate + H2O. It participates in amino-acid biosynthesis; L-histidine biosynthesis; L-histidine from 5-phospho-alpha-D-ribose 1-diphosphate: step 6/9. This is Imidazoleglycerol-phosphate dehydratase from Geobacter metallireducens (strain ATCC 53774 / DSM 7210 / GS-15).